Consider the following 85-residue polypeptide: Small ribosomal subunit protein bS16c (85 aa).

Belongs to the bacterial ribosomal protein bS16 family.

The protein localises to the plastid. It is found in the chloroplast. The polypeptide is Small ribosomal subunit protein bS16c (Saccharum hybrid (Sugarcane)).